Reading from the N-terminus, the 73-residue chain is Translation initiation factor IF-1 (73 aa).

The region spanning 1-72 is the S1-like domain; it reads MPKKDAIEVE…TRGRVTYRFK (72 aa).

It belongs to the IF-1 family. Component of the 30S ribosomal translation pre-initiation complex which assembles on the 30S ribosome in the order IF-2 and IF-3, IF-1 and N-formylmethionyl-tRNA(fMet); mRNA recruitment can occur at any time during PIC assembly.

It is found in the cytoplasm. Its function is as follows. One of the essential components for the initiation of protein synthesis. Stabilizes the binding of IF-2 and IF-3 on the 30S subunit to which N-formylmethionyl-tRNA(fMet) subsequently binds. Helps modulate mRNA selection, yielding the 30S pre-initiation complex (PIC). Upon addition of the 50S ribosomal subunit IF-1, IF-2 and IF-3 are released leaving the mature 70S translation initiation complex. This chain is Translation initiation factor IF-1, found in Dehalococcoides mccartyi (strain ATCC BAA-2266 / KCTC 15142 / 195) (Dehalococcoides ethenogenes (strain 195)).